A 377-amino-acid polypeptide reads, in one-letter code: NIF3-like protein 1 (377 aa).

At Lys109 the chain carries N6-acetyllysine. The tract at residues 244-377 is mediates interaction with COPS2; it reads LLLYTGMGRL…ETDRDPLHVI (134 aa). Residue Thr255 is modified to Phosphothreonine. Position 259 is a phosphoserine (Ser259).

Belongs to the GTP cyclohydrolase I type 2/NIF3 family. As to quaternary structure, homodimer. Interacts with COPS2. Interacts with THOC7.

It localises to the cytoplasm. Its subcellular location is the nucleus. Its function is as follows. May function as a transcriptional corepressor through its interaction with COPS2, negatively regulating the expression of genes involved in neuronal differentiation. The chain is NIF3-like protein 1 from Bos taurus (Bovine).